Reading from the N-terminus, the 90-residue chain is Small ribosomal subunit protein uS15 (90 aa).

It belongs to the universal ribosomal protein uS15 family. Part of the 30S ribosomal subunit. Forms a bridge to the 50S subunit in the 70S ribosome, contacting the 23S rRNA.

Functionally, one of the primary rRNA binding proteins, it binds directly to 16S rRNA where it helps nucleate assembly of the platform of the 30S subunit by binding and bridging several RNA helices of the 16S rRNA. Its function is as follows. Forms an intersubunit bridge (bridge B4) with the 23S rRNA of the 50S subunit in the ribosome. The sequence is that of Small ribosomal subunit protein uS15 from Campylobacter curvus (strain 525.92).